The chain runs to 440 residues: Chromosomal replication initiator protein DnaA (440 aa).

A domain I, interacts with DnaA modulators region spans residues 1–74 (MNPSQILENL…VQSGNKAIIN (74 aa)). The interval 74 to 99 (NIQAQSAKQSNKSTKIDIAHIKAQST) is domain II. A domain III, AAA+ region region spans residues 100-316 (ILNPSFTFES…GIIISLNAYA (217 aa)). Residues Gly-146, Gly-148, Lys-149, and Thr-150 each contribute to the ATP site. The segment at 317-440 (TILGQEITLE…KNKILVKSQS (124 aa)) is domain IV, binds dsDNA.

Belongs to the DnaA family. In terms of assembly, oligomerizes as a right-handed, spiral filament on DNA at oriC.

It is found in the cytoplasm. Its function is as follows. Plays an essential role in the initiation and regulation of chromosomal replication. ATP-DnaA binds to the origin of replication (oriC) to initiate formation of the DNA replication initiation complex once per cell cycle. Binds the DnaA box (a 9 base pair repeat at the origin) and separates the double-stranded (ds)DNA. Forms a right-handed helical filament on oriC DNA; dsDNA binds to the exterior of the filament while single-stranded (ss)DNA is stabiized in the filament's interior. The ATP-DnaA-oriC complex binds and stabilizes one strand of the AT-rich DNA unwinding element (DUE), permitting loading of DNA polymerase. After initiation quickly degrades to an ADP-DnaA complex that is not apt for DNA replication. Binds acidic phospholipids. In Campylobacter jejuni subsp. jejuni serotype O:2 (strain ATCC 700819 / NCTC 11168), this protein is Chromosomal replication initiator protein DnaA.